The chain runs to 687 residues: Acetolactate synthase catalytic subunit, mitochondrial (687 aa).

The transit peptide at 1–90 directs the protein to the mitochondrion; it reads MIRQSTLKNF…AEPDMDTSFV (90 aa). The span at 43-52 shows a compositional bias: low complexity; the sequence is YYSASPLPAS. Positions 43-68 are disordered; sequence YYSASPLPASKRPEPAPSFNVDPLEQ. E139 serves as a coordination point for thiamine diphosphate. FAD is bound by residues R241, 355–376, and 407–426; these read HGCA…VGAR and EVSP…VEGD. The thiamine pyrophosphate binding stretch occupies residues 499–579; the sequence is QHQMWAAQHW…VKILILNNEE (81 aa). Residues D550, N577, and E579 each contribute to the Mg(2+) site.

This sequence belongs to the TPP enzyme family. Homodimer. The acetolactate synthase complex contains the catalytic subunit ILV2 and the regulatory small subunit ILV6. Requires Mg(2+) as cofactor. The cofactor is thiamine diphosphate.

The protein resides in the mitochondrion. The catalysed reaction is 2 pyruvate + H(+) = (2S)-2-acetolactate + CO2. The enzyme catalyses 2-oxobutanoate + pyruvate + H(+) = (S)-2-ethyl-2-hydroxy-3-oxobutanoate + CO2. It participates in amino-acid biosynthesis; L-isoleucine biosynthesis; L-isoleucine from 2-oxobutanoate: step 1/4. Its pathway is amino-acid biosynthesis; L-valine biosynthesis; L-valine from pyruvate: step 1/4. With respect to regulation, the regulatory subunit ILV6 stimulates enzymatic activity seven- to tenfold and confers sensitivity to inhibition by valine and activation by ATP. Its function is as follows. Catalytic subunit of mitochondrial acetolactate synthase, which catalyzes the first of a series of common steps in the biosynthesis of the branched-chain amino acids. Catalyzes the irreversible decarboxylation of pyruvate to a bound hydroxyethyl group that then condenses with either a second pyruvate molecule to form 2-acetolactate (AL) or with 2-ketobutyrate to form 2-aceto-2-hydroxybutyrate (AHB). The first product is the precursor for valine and leucine biosynthesis, while the second leads to isoleucine. The polypeptide is Acetolactate synthase catalytic subunit, mitochondrial (ILV2) (Saccharomyces cerevisiae (strain ATCC 204508 / S288c) (Baker's yeast)).